The primary structure comprises 311 residues: Phospholipid phosphatase 3 (311 aa).

At 1 to 33 the chain is on the cytoplasmic side; sequence MQNYKYDKAIVPESKNGGSPALNNNPRRSGSKR. A Phosphoserine modification is found at S19. The chain crosses the membrane as a helical span at residues 34–54; that stretch reads VLLICLDLFCLFMAGLPFLII. Residues 55–85 are Extracellular-facing; sequence ETSTIKPYHRGFYCNDESIKYPLKTGETIND. The chain crosses the membrane as a helical span at residues 86 to 106; that stretch reads AVLCAVGIVIAILAIITGEFY. Over 107–122 the chain is Cytoplasmic; the sequence is RIYYLKKSRSTIQNPY. The Dityrosine basolateral targeting motif motif lies at 109 to 110; sequence YY. The helical transmembrane segment at 123-143 threads the bilayer; that stretch reads VAALYKQVGCFLFGCAISQSF. At 144-193 the chain is on the extracellular side; that stretch reads TDIAKVSIGRLRPHFLSVCNPDFSQINCSEGYIQNYRCRGDDSKVQEARK. The phosphatase sequence motif I stretch occupies residues 148-156; that stretch reads KVSIGRLRP. N170 carries N-linked (GlcNAc...) asparagine glycosylation. The Integrin-binding motif signature appears at 182 to 184; that stretch reads RGD. The chain crosses the membrane as a helical span at residues 194-214; it reads SFFSGHASFSMYTMLYLVLYL. The interval 196 to 199 is phosphatase sequence motif II; sequence FSGH. The active-site Proton donors is the H199. Residues 215–225 lie on the Cytoplasmic side of the membrane; it reads QARFTWRGARL. Residues 226–243 traverse the membrane as a helical segment; that stretch reads LRPLLQFTLIMMAFYTGL. The interval 244–255 is phosphatase sequence motif III; that stretch reads SRVSDHKHHPSD. At 244 to 257 the chain is on the extracellular side; the sequence is SRVSDHKHHPSDVL. H251 functions as the Nucleophile in the catalytic mechanism. Residues 258–278 traverse the membrane as a helical segment; sequence AGFAQGALVACCIVFFVSDLF. The tract at residues 275-311 is mediates interaction with CTNND1; the sequence is SDLFKTKTTLSLPAPAIRKEILSPVDIIDRNNHHNMM. Residues 279–311 are Cytoplasmic-facing; sequence KTKTTLSLPAPAIRKEILSPVDIIDRNNHHNMM.

This sequence belongs to the PA-phosphatase related phosphoesterase family. In terms of assembly, forms functional homodimers and homooligomers that are not required for substrate recognition and catalytic activity. Can also form heterooligomers with other PLPP2 and PLPP3. Interacts with CTNND1; negatively regulates the PLPP3-mediated stabilization of beta-catenin/CTNNB1. Post-translationally, N-glycosylated. Contains high-mannose oligosaccharides. In terms of tissue distribution, ubiquitously expressed. Highly expressed in heart and placenta.

Its subcellular location is the cell membrane. The protein resides in the basolateral cell membrane. It is found in the endoplasmic reticulum membrane. The protein localises to the endoplasmic reticulum-Golgi intermediate compartment membrane. It localises to the golgi apparatus membrane. Its subcellular location is the golgi apparatus. The protein resides in the trans-Golgi network membrane. It is found in the membrane raft. The catalysed reaction is a 1,2-diacyl-sn-glycero-3-phosphate + H2O = a 1,2-diacyl-sn-glycerol + phosphate. It catalyses the reaction 1,2-dihexadecanoyl-sn-glycero-3-phosphate + H2O = 1,2-dihexadecanoyl-sn-glycerol + phosphate. The enzyme catalyses 1,2-di-(9Z-octadecenoyl)-sn-glycero-3-phosphate + H2O = 1,2-di-(9Z-octadecenoyl)-sn-glycerol + phosphate. It carries out the reaction a monoacyl-sn-glycero-3-phosphate + H2O = a monoacylglycerol + phosphate. The catalysed reaction is (9Z)-octadecenoyl-sn-glycero-3-phosphate + H2O = (9Z-octadecenoyl)-glycerol + phosphate. It catalyses the reaction sphing-4-enine 1-phosphate + H2O = sphing-4-enine + phosphate. The enzyme catalyses an N-acylsphing-4-enine 1-phosphate + H2O = an N-acylsphing-4-enine + phosphate. It carries out the reaction N-(octanoyl)-sphing-4-enine-1-phosphate + H2O = N-octanoylsphing-4-enine + phosphate. The catalysed reaction is N-(9Z-octadecenoyl)-ethanolamine phosphate + H2O = N-(9Z-octadecenoyl) ethanolamine + phosphate. The protein operates within lipid metabolism; phospholipid metabolism. Its activity is regulated as follows. Magnesium-independent phospholipid phosphatase. Insensitive to N-ethylmaleimide. Inhibited by sphingosine, zinc ions and modestly by propanolol. Functionally, magnesium-independent phospholipid phosphatase of the plasma membrane that catalyzes the dephosphorylation of a variety of glycerolipid and sphingolipid phosphate esters including phosphatidate/PA, lysophosphatidate/LPA, diacylglycerol pyrophosphate/DGPP, sphingosine 1-phosphate/S1P and ceramide 1-phosphate/C1P. Also acts on N-oleoyl ethanolamine phosphate/N-(9Z-octadecenoyl)-ethanolamine phosphate, a potential physiological compound. Has both an extracellular and an intracellular phosphatase activity, allowing the hydrolysis and the cellular uptake of these bioactive lipid mediators from the milieu, regulating signal transduction in different cellular processes. Through the dephosphorylation of extracellular sphingosine-1-phosphate and the regulation of its extra- and intracellular availability, plays a role in vascular homeostasis, regulating endothelial cell migration, adhesion, survival, proliferation and the production of pro-inflammatory cytokines. By maintaining the appropriate levels of this lipid in the cerebellum, also ensure its proper development and function. Through its intracellular lipid phosphatase activity may act in early compartments of the secretory pathway, regulating the formation of Golgi to endoplasmic reticulum retrograde transport carriers. In terms of biological role, independently of this phosphatase activity may also function in the Wnt signaling pathway and the stabilization of beta-catenin/CTNNB1, thereby regulating cell proliferation, migration and differentiation in angiogenesis or yet in tumor growth. Also plays a role in integrin-mediated cell-cell adhesion in angiogenesis. In Homo sapiens (Human), this protein is Phospholipid phosphatase 3.